The chain runs to 728 residues: MVAVAAAAASRATAESEPEWNVAAPDLLYAEGTAAYARGDWPGVVLNMERALRSRAALRALRLRCRTRCATELPWAPDLDLGPASSLNHDPGAAALHDLRFFGALLRRAACLRRCLGPPSAHLLSEELDLEFNKRSPYNYLQVAYFKINKLEKAVAAAHTFFVGNPEHMEMRQNLDYYQTMSGVKEEDFKDLEAKPHMHEFRLGVRLYSEEKPLEAVPHLEAALQEYFVADEECRALCEGPYDYDGYNYLDYSADLFQAITDHYVQVLSCKQNCVTELASHPSREKPFEDFLPSHYNYLQFAYYNIGNYTQAIECAKTYLLFFPNDEVMSQNLAYYTAVLGEEEASSISPRENAQEYRHRSLLEKELLFFAYDIFGIPFVDPDSWTPEEVIPKRLQEKQKSERETAVRISQEIGNLMKEIETLVEEKTKESLDVSRLTREGGPLLYEGINLTMNSKVLNGSQRVVMDGVISDDECQELQRLTNAAATSGDGYRGQTSPHTPNEKFYGVTVLKALKLGQEGKVPLQSAHMYYNVTEKVRRVMESYFRLDTPLYFSYSHLVCRTAIEESQAERKDSSHPVHVDNCILNAESLVCIKEPPAYTFRDYSAILYLNGDFDGGNFYFTELDAKTVTAEVQPQCGRAVGFSSGTENPHGVKAVTRGQRCAIALWFTLDPRHSERDRVQADDLVKMLFSPEEVDLPQEQPLPDQQGSPKPGEESLSDRESQPKDEL.

The N-terminal stretch at 1-14 (MVAVAAAAASRATA) is a signal peptide. TPR repeat units lie at residues 25–58 (PDLLYAEGTAAYARGDWPGVVLNMERALRSRAAL), 135–168 (RSPYNYLQVAYFKINKLEKAVAAAHTFFVGNPEH), 197–230 (HMHEFRLGVRLYSEEKPLEAVPHLEAALQEYFVA), and 293–326 (PSHYNYLQFAYYNIGNYTQAIECAKTYLLFFPND). A glycan (N-linked (GlcNAc...) asparagine) is linked at asparagine 308. Residues 393-431 (KRLQEKQKSERETAVRISQEIGNLMKEIETLVEEKTKES) adopt a coiled-coil conformation. 3 N-linked (GlcNAc...) asparagine glycosylation sites follow: asparagine 450, asparagine 459, and asparagine 532. The Fe2OG dioxygenase domain maps to 556-670 (SHLVCRTAIE…RCAIALWFTL (115 aa)). Histidine 579, aspartate 581, and histidine 651 together coordinate Fe cation. Arginine 661 is a catalytic residue. The interval 691–728 (SPEEVDLPQEQPLPDQQGSPKPGEESLSDRESQPKDEL) is disordered. Over residues 698 to 707 (PQEQPLPDQQ) the composition is skewed to low complexity. The span at 712 to 728 (PGEESLSDRESQPKDEL) shows a compositional bias: basic and acidic residues. The Prevents secretion from ER motif lies at 725–728 (KDEL).

It belongs to the leprecan family. The cofactor is Fe cation. L-ascorbate is required as a cofactor. O-glycosylated; chondroitin sulfate. In terms of tissue distribution, expressed in basement membranes of cardiac muscle, skeletal muscle, central nervous system, intestinal tract, trachea, ear, skin, liver and kidney. In kidney, localizes to the glomerular basement membrane, mesangial matrix and Bowman's capsule of the nephron. In the renal parenchyma, expressed in the basement membranes of tubules and blood vessels. In the ear and trachea, localizes to the perimeter of resident chondrocytes in lacunae.

It is found in the endoplasmic reticulum. The protein localises to the secreted. The protein resides in the extracellular space. It localises to the extracellular matrix. It carries out the reaction L-prolyl-[collagen] + 2-oxoglutarate + O2 = trans-3-hydroxy-L-prolyl-[collagen] + succinate + CO2. Its function is as follows. Basement membrane-associated chondroitin sulfate proteoglycan (CSPG). Has prolyl 3-hydroxylase activity catalyzing the post-translational formation of 3-hydroxyproline in -Xaa-Pro-Gly- sequences in collagens, especially types IV and V. May be involved in the secretory pathway of cells. Has growth suppressive activity in fibroblasts. The polypeptide is Prolyl 3-hydroxylase 1 (Rattus norvegicus (Rat)).